The following is a 62-amino-acid chain: Large ribosomal subunit protein bL28 (62 aa).

A disordered region spans residues 1-23; sequence MGKQCYVTGRKASTGNRRSHALN.

This sequence belongs to the bacterial ribosomal protein bL28 family.

The chain is Large ribosomal subunit protein bL28 from Staphylococcus carnosus (strain TM300).